A 233-amino-acid chain; its full sequence is Hydroxyacylglutathione hydrolase (233 aa).

7 residues coordinate Zn(2+): His52, His54, Asp56, His57, His108, Asp125, and His163.

It belongs to the metallo-beta-lactamase superfamily. Glyoxalase II family. In terms of assembly, monomer. Zn(2+) is required as a cofactor.

The enzyme catalyses an S-(2-hydroxyacyl)glutathione + H2O = a 2-hydroxy carboxylate + glutathione + H(+). Its pathway is secondary metabolite metabolism; methylglyoxal degradation; (R)-lactate from methylglyoxal: step 2/2. Functionally, thiolesterase that catalyzes the hydrolysis of S-D-lactoyl-glutathione to form glutathione and D-lactic acid. The polypeptide is Hydroxyacylglutathione hydrolase (Histophilus somni (strain 2336) (Haemophilus somnus)).